The chain runs to 473 residues: UDP-N-acetylmuramate--L-alanine ligase (473 aa).

ATP is bound at residue 114 to 120 (GTHGKTT).

Belongs to the MurCDEF family.

The protein resides in the cytoplasm. It catalyses the reaction UDP-N-acetyl-alpha-D-muramate + L-alanine + ATP = UDP-N-acetyl-alpha-D-muramoyl-L-alanine + ADP + phosphate + H(+). It participates in cell wall biogenesis; peptidoglycan biosynthesis. Cell wall formation. The protein is UDP-N-acetylmuramate--L-alanine ligase of Chlorobium luteolum (strain DSM 273 / BCRC 81028 / 2530) (Pelodictyon luteolum).